The sequence spans 216 residues: Probable nicotinate-nucleotide adenylyltransferase (216 aa).

Belongs to the NadD family.

The enzyme catalyses nicotinate beta-D-ribonucleotide + ATP + H(+) = deamido-NAD(+) + diphosphate. It participates in cofactor biosynthesis; NAD(+) biosynthesis; deamido-NAD(+) from nicotinate D-ribonucleotide: step 1/1. Functionally, catalyzes the reversible adenylation of nicotinate mononucleotide (NaMN) to nicotinic acid adenine dinucleotide (NaAD). This Shewanella baltica (strain OS185) protein is Probable nicotinate-nucleotide adenylyltransferase.